The following is a 352-amino-acid chain: Protein RecA (352 aa).

ATP is bound at residue 66 to 73; the sequence is GPESSGKT.

Belongs to the RecA family.

The protein resides in the cytoplasm. Can catalyze the hydrolysis of ATP in the presence of single-stranded DNA, the ATP-dependent uptake of single-stranded DNA by duplex DNA, and the ATP-dependent hybridization of homologous single-stranded DNAs. It interacts with LexA causing its activation and leading to its autocatalytic cleavage. This Psychrobacter arcticus (strain DSM 17307 / VKM B-2377 / 273-4) protein is Protein RecA.